A 78-amino-acid chain; its full sequence is DNA-directed RNA polymerase subunit omega (78 aa).

Belongs to the RNA polymerase subunit omega family. In cyanobacteria the RNAP catalytic core is composed of 2 alpha, 1 beta, 1 beta', 1 gamma and 1 omega subunit. When a sigma factor is associated with the core the holoenzyme is formed, which can initiate transcription.

The catalysed reaction is RNA(n) + a ribonucleoside 5'-triphosphate = RNA(n+1) + diphosphate. Functionally, promotes RNA polymerase assembly. Latches the N- and C-terminal regions of the beta' subunit thereby facilitating its interaction with the beta and alpha subunits. The chain is DNA-directed RNA polymerase subunit omega from Prochlorococcus marinus (strain MIT 9301).